A 512-amino-acid polypeptide reads, in one-letter code: 2,3-bisphosphoglycerate-independent phosphoglycerate mutase (512 aa).

Residues Asp18 and Ser68 each contribute to the Mn(2+) site. The Phosphoserine intermediate role is filled by Ser68. Substrate contacts are provided by residues His129, 159–160, Arg191, Arg197, 265–268, and Lys338; these read RD and RPDR. 5 residues coordinate Mn(2+): Asp403, His407, Asp444, His445, and His462.

Belongs to the BPG-independent phosphoglycerate mutase family. As to quaternary structure, monomer. It depends on Mn(2+) as a cofactor.

The enzyme catalyses (2R)-2-phosphoglycerate = (2R)-3-phosphoglycerate. It functions in the pathway carbohydrate degradation; glycolysis; pyruvate from D-glyceraldehyde 3-phosphate: step 3/5. Catalyzes the interconversion of 2-phosphoglycerate and 3-phosphoglycerate. The protein is 2,3-bisphosphoglycerate-independent phosphoglycerate mutase of Mesomycoplasma hyopneumoniae (strain 232) (Mycoplasma hyopneumoniae).